Here is a 119-residue protein sequence, read N- to C-terminus: uncharacterized protein (119 aa).

Residues 80-104 (VFPLVYLFCVVFQFLSLGCYLSIFF) traverse the membrane as a helical segment.

Its subcellular location is the membrane. This is an uncharacterized protein from Saccharomyces cerevisiae (strain ATCC 204508 / S288c) (Baker's yeast).